Consider the following 237-residue polypeptide: Large ribosomal subunit protein bL25 (237 aa).

Residues 1-104 form an N-terminal domain region; it reads MELTAKPRTP…SVPVHTTGRS (104 aa). The segment at 105-189 is middle domain; the sequence is QGEVQGGLVD…ELEAEVQAAQ (85 aa). The C-terminal domain stretch occupies residues 190–237; that stretch reads VAGLVAAGELSEEAAEAVLEGDASLEEVKAEASEDNAGTDSEDNSDAQ. Positions 205 to 237 are disordered; that stretch reads EAVLEGDASLEEVKAEASEDNAGTDSEDNSDAQ.

It belongs to the bacterial ribosomal protein bL25 family. CTC subfamily. In terms of assembly, part of the 50S ribosomal subunit. Contacts proteins L11 and L16, the A site tRNA, and the 5S and 23S rRNAs.

Its function is as follows. This is one of 3 proteins that mediate the attachment of the 5S rRNA onto the large ribosomal subunit. This protein has three domains. The N-terminal one is bound on the solvent face, the middle domain fills the space between the 5S rRNA and the L11 arm contacting the 23S rRNA while the C-terminal domain is on the edge of the intersubunit interface and contacts the A site. The protein conformation changes upon binding of a tRNA mimic to the A site, although the mimic does not interact directly with CTC itself, consistent with CTCs presumed role in moderating A site binding. The chain is Large ribosomal subunit protein bL25 (rplY) from Deinococcus radiodurans (strain ATCC 13939 / DSM 20539 / JCM 16871 / CCUG 27074 / LMG 4051 / NBRC 15346 / NCIMB 9279 / VKM B-1422 / R1).